Reading from the N-terminus, the 104-residue chain is L-rhamnose mutarotase (104 aa).

Tyr-18 lines the substrate pocket. His-22 (proton donor) is an active-site residue. Substrate-binding positions include Tyr-41 and 76–77 (WW).

The protein belongs to the rhamnose mutarotase family. Homodimer.

The protein localises to the cytoplasm. It catalyses the reaction alpha-L-rhamnose = beta-L-rhamnose. Its pathway is carbohydrate metabolism; L-rhamnose metabolism. Involved in the anomeric conversion of L-rhamnose. The polypeptide is L-rhamnose mutarotase (Klebsiella pneumoniae subsp. pneumoniae (strain ATCC 700721 / MGH 78578)).